Consider the following 627-residue polypeptide: Phosphomethylpyrimidine synthase (627 aa).

Residues N233, M262, Y291, H327, 347 to 349 (SRG), 388 to 391 (DGLR), and E427 contribute to the substrate site. H431 lines the Zn(2+) pocket. Y454 contributes to the substrate binding site. Residue H495 coordinates Zn(2+). [4Fe-4S] cluster-binding residues include C575, C578, and C583.

Belongs to the ThiC family. Homodimer. [4Fe-4S] cluster is required as a cofactor.

It carries out the reaction 5-amino-1-(5-phospho-beta-D-ribosyl)imidazole + S-adenosyl-L-methionine = 4-amino-2-methyl-5-(phosphooxymethyl)pyrimidine + CO + 5'-deoxyadenosine + formate + L-methionine + 3 H(+). It participates in cofactor biosynthesis; thiamine diphosphate biosynthesis. Its function is as follows. Catalyzes the synthesis of the hydroxymethylpyrimidine phosphate (HMP-P) moiety of thiamine from aminoimidazole ribotide (AIR) in a radical S-adenosyl-L-methionine (SAM)-dependent reaction. This Acidithiobacillus ferrooxidans (strain ATCC 23270 / DSM 14882 / CIP 104768 / NCIMB 8455) (Ferrobacillus ferrooxidans (strain ATCC 23270)) protein is Phosphomethylpyrimidine synthase.